The following is a 97-amino-acid chain: Large ribosomal subunit protein uL23 (97 aa).

It belongs to the universal ribosomal protein uL23 family. As to quaternary structure, part of the 50S ribosomal subunit. Contacts protein L29, and trigger factor when it is bound to the ribosome.

In terms of biological role, one of the early assembly proteins it binds 23S rRNA. One of the proteins that surrounds the polypeptide exit tunnel on the outside of the ribosome. Forms the main docking site for trigger factor binding to the ribosome. This chain is Large ribosomal subunit protein uL23, found in Agrobacterium fabrum (strain C58 / ATCC 33970) (Agrobacterium tumefaciens (strain C58)).